A 203-amino-acid chain; its full sequence is Translation initiation factor IF-3 (203 aa).

A disordered region spans residues 168–203 (QLSPKKKESATKKPATPKPATPAAVKAEKPAGDNEE). The span at 193-203 (KAEKPAGDNEE) shows a compositional bias: basic and acidic residues.

It belongs to the IF-3 family. Monomer.

The protein resides in the cytoplasm. IF-3 binds to the 30S ribosomal subunit and shifts the equilibrium between 70S ribosomes and their 50S and 30S subunits in favor of the free subunits, thus enhancing the availability of 30S subunits on which protein synthesis initiation begins. This chain is Translation initiation factor IF-3, found in Bacteroides fragilis (strain ATCC 25285 / DSM 2151 / CCUG 4856 / JCM 11019 / LMG 10263 / NCTC 9343 / Onslow / VPI 2553 / EN-2).